Reading from the N-terminus, the 49-residue chain is Large ribosomal subunit protein bL33A (49 aa).

It belongs to the bacterial ribosomal protein bL33 family.

The chain is Large ribosomal subunit protein bL33A from Limosilactobacillus reuteri subsp. reuteri (strain JCM 1112) (Lactobacillus reuteri).